Reading from the N-terminus, the 305-residue chain is UDP-3-O-acyl-N-acetylglucosamine deacetylase (305 aa).

Zn(2+) is bound by residues His79, His238, and Asp242. His265 functions as the Proton donor in the catalytic mechanism.

It belongs to the LpxC family. Zn(2+) is required as a cofactor.

The enzyme catalyses a UDP-3-O-[(3R)-3-hydroxyacyl]-N-acetyl-alpha-D-glucosamine + H2O = a UDP-3-O-[(3R)-3-hydroxyacyl]-alpha-D-glucosamine + acetate. The protein operates within glycolipid biosynthesis; lipid IV(A) biosynthesis; lipid IV(A) from (3R)-3-hydroxytetradecanoyl-[acyl-carrier-protein] and UDP-N-acetyl-alpha-D-glucosamine: step 2/6. Functionally, catalyzes the hydrolysis of UDP-3-O-myristoyl-N-acetylglucosamine to form UDP-3-O-myristoylglucosamine and acetate, the committed step in lipid A biosynthesis. The chain is UDP-3-O-acyl-N-acetylglucosamine deacetylase from Aliivibrio fischeri (strain ATCC 700601 / ES114) (Vibrio fischeri).